We begin with the raw amino-acid sequence, 229 residues long: MTNFQDKPNIRIMFDSLAPTYDKINKILSLGLHLTWNHSFVSLLGRSDHLLDLCAGTGHVALSYIQKYPQASATLVDFSTKMLENVQECHPLAPFSYVISDVTSMPLPNDTFHLASMAYGLRNLSSPLEALKEVHRVLKPKGRLGILELTRPATYNPVHLLHKLYLNLVVPSVGRFYSGNSYAYSYLKESIRNLPCDTSLERVFHKSGLHIIRKRKLLFGTATIWILEK.

Residues Thr57, Asp77, and 101-102 (DV) each bind S-adenosyl-L-methionine.

This sequence belongs to the class I-like SAM-binding methyltransferase superfamily. MenG/UbiE family.

It carries out the reaction a 2-demethylmenaquinol + S-adenosyl-L-methionine = a menaquinol + S-adenosyl-L-homocysteine + H(+). Its pathway is quinol/quinone metabolism; menaquinone biosynthesis; menaquinol from 1,4-dihydroxy-2-naphthoate: step 2/2. Its function is as follows. Methyltransferase required for the conversion of demethylmenaquinol (DMKH2) to menaquinol (MKH2). In Chlamydia muridarum (strain MoPn / Nigg), this protein is Demethylmenaquinone methyltransferase.